Reading from the N-terminus, the 168-residue chain is Large ribosomal subunit protein bL9 (168 aa).

The segment at 149–168 is disordered; that stretch reads QSFEEEPAPEAPAEEAEAAE. Residues 152–168 are compositionally biased toward acidic residues; sequence EEEPAPEAPAEEAEAAE.

Belongs to the bacterial ribosomal protein bL9 family.

In terms of biological role, binds to the 23S rRNA. The polypeptide is Large ribosomal subunit protein bL9 (Desulfovibrio desulfuricans (strain ATCC 27774 / DSM 6949 / MB)).